Here is a 219-residue protein sequence, read N- to C-terminus: Interleukin-12 subunit alpha (219 aa).

Residues 1–22 (MCPARSLLLVATLVLLDYLSLA) form the signal peptide. 2 N-linked (GlcNAc...) asparagine glycosylation sites follow: Asn-24 and Asn-93. Cystine bridges form between Cys-37-Cys-110, Cys-64-Cys-196, and Cys-85-Cys-123.

This sequence belongs to the IL-6 superfamily. In terms of assembly, heterodimer with IL12B; disulfide-linked. This heterodimer is known as interleukin IL-12. Heterodimer with EBI3/IL27B; not disulfide-linked. This heterodimer is known as interleukin IL-35. Interacts with NBR1; this interaction promotes IL-12 secretion.

It localises to the secreted. Functionally, heterodimerizes with IL12B to form the IL-12 cytokine or with EBI3/IL27B to form the IL-35 cytokine. IL-12 is primarily produced by professional antigen-presenting cells (APCs) such as B-cells and dendritic cells (DCs) as well as macrophages and granulocytes and regulates T-cell and natural killer-cell responses, induces the production of interferon-gamma (IFN-gamma), favors the differentiation of T-helper 1 (Th1) cells and is an important link between innate resistance and adaptive immunity. Mechanistically, exerts its biological effects through a receptor composed of IL12R1 and IL12R2 subunits. Binding to the receptor results in the rapid tyrosine phosphorylation of a number of cellular substrates including the JAK family kinases TYK2 and JAK2. In turn, recruited STAT4 gets phosphorylated and translocates to the nucleus where it regulates cytokine/growth factor responsive genes. As part of IL-35, plays essential roles in maintaining the immune homeostasis of the liver microenvironment and also functions as an immune-suppressive cytokine. Mediates biological events through unconventional receptors composed of IL12RB2 and gp130/IL6ST heterodimers or homodimers. Signaling requires the transcription factors STAT1 and STAT4, which form a unique heterodimer that binds to distinct DNA sites. This Papio anubis (Olive baboon) protein is Interleukin-12 subunit alpha (IL12A).